The sequence spans 751 residues: MTISPPEREIKTVKIVVDRDPVPTSFEKWAKPGHFSRTLAKGPATTTWVWDLHADAHDFDSHTTDLEDISRKVFSAHFGQLGVIFIWLSGMYFHGARFSNYEAWLSDPTHIKPSAQVVWPIVGQEILNGDVGGGFQGVQITSGFFQLWRGSGITSELQLYSTAIGALICAGLMFFAGWWHYHKAAPKLEWFQNVESMMNHHLAGLLGLGSLAWAGHQIHIALPVNTLLDAGVDPKEIPLPHEFMLNRALMAELYPSFAKGLTPFFTFNWTEYSDFLTFRGGLNPVTGGLWLTDMAHHHLAIAVLFLVAGHQYRTNWGIGHSMKEILEAHKGPFTGEGHKGLYEILTTSWHAQLAINLALMGSLSIIVSHHMYSMPPYPYLATDYGTQLSLFTHHMWIGGFCICGAAAHAAIFMVRDYDPATNYNNVLDRVLRHRDAIISHLNWVCIFLGFHSFGLYIHNDTMSALGRPQDMFSDTAIQLQPIFAQFVQHTHALAPELTAPTAAGSTSASWGGDIVAVGGKIAMMPISLGTSDFMVHHIHAFTIHVTVLILLKGVLFARSSRLIPDKANLGFRFPCDGPGRGGTCQVSAWDHVFLGLFWMYNSISIVIFHFSWKMQSDVWGSVTGNGVSHITGGNFAQSANTINGWLRDFLWAQSSQVIQSYGSALSAYGLIFLGAHFIWAFSLMFLFSGRGYWQELIESIVWAHNKLKVAPAIQPRALSITQGRAVGVAHYLLGGIATTWSFFLARIIAVG.

Helical transmembrane passes span valine 73 to alanine 96, leucine 159 to histidine 182, methionine 198 to leucine 222, methionine 294 to tyrosine 312, tryptophan 349 to tyrosine 372, leucine 388 to valine 414, alanine 436 to histidine 458, and phenylalanine 533 to leucine 551. Residues cysteine 575 and cysteine 584 each contribute to the [4Fe-4S] cluster site. A run of 2 helical transmembrane segments spans residues histidine 591–tryptophan 612 and leucine 665–phenylalanine 687. Histidine 676 is a binding site for chlorophyll a'. Methionine 684 and tyrosine 692 together coordinate chlorophyll a. Tryptophan 693 provides a ligand contact to phylloquinone. Residues alanine 725–alanine 745 form a helical membrane-spanning segment.

The protein belongs to the PsaA/PsaB family. The PsaA/B heterodimer binds the P700 chlorophyll special pair and subsequent electron acceptors. PSI consists of a core antenna complex that captures photons, and an electron transfer chain that converts photonic excitation into a charge separation. The eukaryotic PSI reaction center is composed of at least 11 subunits. It depends on P700 is a chlorophyll a/chlorophyll a' dimer, A0 is one or more chlorophyll a, A1 is one or both phylloquinones and FX is a shared 4Fe-4S iron-sulfur center. as a cofactor.

It is found in the plastid. It localises to the chloroplast thylakoid membrane. The enzyme catalyses reduced [plastocyanin] + hnu + oxidized [2Fe-2S]-[ferredoxin] = oxidized [plastocyanin] + reduced [2Fe-2S]-[ferredoxin]. Its function is as follows. PsaA and PsaB bind P700, the primary electron donor of photosystem I (PSI), as well as the electron acceptors A0, A1 and FX. PSI is a plastocyanin/cytochrome c6-ferredoxin oxidoreductase, converting photonic excitation into a charge separation, which transfers an electron from the donor P700 chlorophyll pair to the spectroscopically characterized acceptors A0, A1, FX, FA and FB in turn. Oxidized P700 is reduced on the lumenal side of the thylakoid membrane by plastocyanin or cytochrome c6. The chain is Photosystem I P700 chlorophyll a apoprotein A1 from Ostreococcus tauri.